The sequence spans 327 residues: GTPase Obg (327 aa).

Positions 2-160 constitute an Obg domain; that stretch reads HTFKDSLNIT…LDLRLELVLI (159 aa). An OBG-type G domain is found at 161–326; sequence ADIGLVGLPN…LVNELFALSR (166 aa). GTP-binding positions include 167–174, 192–196, 213–216, 280–283, and 307–309; these read GLPNAGKS, FTTKV, DVPG, NKLD, and SIY. Mg(2+)-binding residues include S174 and T194.

Belongs to the TRAFAC class OBG-HflX-like GTPase superfamily. OBG GTPase family. In terms of assembly, monomer. It depends on Mg(2+) as a cofactor.

Its subcellular location is the cytoplasm. An essential GTPase which binds GTP, GDP and possibly (p)ppGpp with moderate affinity, with high nucleotide exchange rates and a fairly low GTP hydrolysis rate. Plays a role in control of the cell cycle, stress response, ribosome biogenesis and in those bacteria that undergo differentiation, in morphogenesis control. The chain is GTPase Obg from Borrelia turicatae (strain 91E135).